We begin with the raw amino-acid sequence, 1068 residues long: Tricorn protease homolog (1068 aa).

Residues 61 to 326 form a six-bladed beta propeller region; it reads MKAYYMYPDI…DSLTKLDINL (266 aa). Residues 338 to 686 form a seven-bladed beta propeller region; sequence VNVMEYMNEA…RKGGVIDLSR (349 aa). The tract at residues 692–762 is C-1; that stretch reads EPEKEWRQML…RTSHSYETAY (71 aa). Catalysis depends on histidine 756, which acts as the Charge relay system. Residues 771–864 form a PDZ-like region; it reads SVGGLGAEFE…RVTVKVLKDE (94 aa). The C-2 stretch occupies residues 865 to 1068; sequence RFLIYRYWVE…TAIELALKQL (204 aa). Glycine 927 provides a ligand contact to substrate. The active-site Nucleophile is the serine 974. Glutamate 1032 (charge relay system) is an active-site residue.

It belongs to the peptidase S41B family.

It is found in the cytoplasm. In terms of biological role, degrades oligopeptides in a sequential manner. The protein is Tricorn protease homolog (tri) of Saccharolobus solfataricus (strain ATCC 35092 / DSM 1617 / JCM 11322 / P2) (Sulfolobus solfataricus).